The following is a 141-amino-acid chain: Hemoglobin subunit alpha (141 aa).

Residues 1–141 (VLSANDKSNV…VSTVLTSKYR (141 aa)) form the Globin domain. Phosphoserine is present on Ser-3. Residues Lys-7 and Lys-11 each carry the N6-succinyllysine modification. Lys-16 is modified (N6-acetyllysine; alternate). An N6-succinyllysine; alternate modification is found at Lys-16. The residue at position 24 (Tyr-24) is a Phosphotyrosine. Ser-35 carries the phosphoserine modification. The residue at position 40 (Lys-40) is an N6-succinyllysine. Residue Ser-49 is modified to Phosphoserine. His-58 provides a ligand contact to O2. His-87 provides a ligand contact to heme b. Ser-102 carries the phosphoserine modification. Thr-108 bears the Phosphothreonine mark. Ser-124 bears the Phosphoserine mark. Phosphothreonine is present on residues Thr-134 and Thr-137. Ser-138 bears the Phosphoserine mark.

This sequence belongs to the globin family. As to quaternary structure, heterotetramer of two alpha chains and two beta chains. In terms of tissue distribution, red blood cells.

Functionally, involved in oxygen transport from the lung to the various peripheral tissues. In terms of biological role, hemopressin acts as an antagonist peptide of the cannabinoid receptor CNR1. Hemopressin-binding efficiently blocks cannabinoid receptor CNR1 and subsequent signaling. In Hippopotamus amphibius (Hippopotamus), this protein is Hemoglobin subunit alpha (HBA).